The sequence spans 335 residues: MIEFHNVHKTYRVAGKEIPALHPTSLRVDGGQVFGIIGHSGAGKSTLLRLINRLETPSGGQIVVDGEDVTALDANGLRRFRQQVGMIFQHFNLLASKTVADNVAMPLTLAGDMSRKQIDQRVAELLKRVGLSDHAKKYPAQLSGGQKQRVGIARALATKPKILLCDEATSALDPQTTASVLQLLAEINRELKLTIVLITHEMDVIRRVCDQVAVMDAGVIVEQGKVADVFLHPQHPTTRRFVQEDDQIDENEQRDDFAHVQGRIVRLTFQGDATYAPLLGTVARETGVDYSILAGRIDRIKDTPYGQLTLAITGGDMDAAFARFTAADVHMEVLR.

The 241-residue stretch at 2–242 (IEFHNVHKTY…PQHPTTRRFV (241 aa)) folds into the ABC transporter domain. ATP is bound at residue 38 to 45 (GHSGAGKS).

This sequence belongs to the ABC transporter superfamily. Methionine importer (TC 3.A.1.24) family. The complex is composed of two ATP-binding proteins (MetN), two transmembrane proteins (MetI) and a solute-binding protein (MetQ).

Its subcellular location is the cell inner membrane. The enzyme catalyses L-methionine(out) + ATP + H2O = L-methionine(in) + ADP + phosphate + H(+). The catalysed reaction is D-methionine(out) + ATP + H2O = D-methionine(in) + ADP + phosphate + H(+). Functionally, part of the ABC transporter complex MetNIQ involved in methionine import. Responsible for energy coupling to the transport system. The protein is Methionine import ATP-binding protein MetN 1 of Pseudomonas savastanoi pv. phaseolicola (strain 1448A / Race 6) (Pseudomonas syringae pv. phaseolicola (strain 1448A / Race 6)).